Reading from the N-terminus, the 878-residue chain is Outer membrane usher protein FimD (878 aa).

The N-terminal stretch at 1–45 is a signal peptide; it reads MSYLNLRLYQRNTQCLHIRKHRLAGFFVRLVVACAFAAQAPLSSA. Residues C855 and C877 are joined by a disulfide bond.

The protein belongs to the fimbrial export usher family.

It localises to the cell outer membrane. Its function is as follows. Involved in the export and assembly of FimA fimbrial subunits across the outer membrane. In Escherichia coli (strain K12), this protein is Outer membrane usher protein FimD (fimD).